The primary structure comprises 293 residues: 4-hydroxy-tetrahydrodipicolinate synthase (293 aa).

Threonine 51 contacts pyruvate. Catalysis depends on tyrosine 140, which acts as the Proton donor/acceptor. The active-site Schiff-base intermediate with substrate is the lysine 168. Residue isoleucine 209 participates in pyruvate binding.

This sequence belongs to the DapA family. Homotetramer; dimer of dimers.

It localises to the cytoplasm. It catalyses the reaction L-aspartate 4-semialdehyde + pyruvate = (2S,4S)-4-hydroxy-2,3,4,5-tetrahydrodipicolinate + H2O + H(+). The protein operates within amino-acid biosynthesis; L-lysine biosynthesis via DAP pathway; (S)-tetrahydrodipicolinate from L-aspartate: step 3/4. Catalyzes the condensation of (S)-aspartate-beta-semialdehyde [(S)-ASA] and pyruvate to 4-hydroxy-tetrahydrodipicolinate (HTPA). In Streptococcus mutans serotype c (strain ATCC 700610 / UA159), this protein is 4-hydroxy-tetrahydrodipicolinate synthase.